A 398-amino-acid chain; its full sequence is Acetyl-CoA acetyltransferase (398 aa).

Ser2 bears the N-acetylserine mark. Residue Cys91 is the Acyl-thioester intermediate of the active site. 2 residues coordinate CoA: Tyr186 and Lys231. Tyr186 contributes to the K(+) binding site. Ala248, Ala249, and Ala251 together coordinate K(+). Residue Ser252 coordinates CoA. Val350 is a binding site for K(+). Active-site proton acceptor residues include His354 and Cys384.

It belongs to the thiolase-like superfamily. Thiolase family. In terms of assembly, homotetramer.

The protein resides in the cytoplasm. It localises to the cytosol. It carries out the reaction 2 acetyl-CoA = acetoacetyl-CoA + CoA. Its pathway is metabolic intermediate biosynthesis; (R)-mevalonate biosynthesis; (R)-mevalonate from acetyl-CoA: step 1/3. Acetyl-CoA acetyltransferase; part of the first module of ergosterol biosynthesis pathway that includes the early steps of the pathway, conserved across all eukaryotes, and which results in the formation of mevalonate from acetyl-coenzyme A (acetyl-CoA). ERG10 catalyzes the formation of acetoacetyl-CoA from acetyl-CoA. The first module starts with the action of the cytosolic acetyl-CoA acetyltransferase ERG10 that catalyzes the formation of acetoacetyl-CoA. The hydroxymethylglutaryl-CoA synthase ERG13 then condenses acetyl-CoA with acetoacetyl-CoA to form HMG-CoA. The rate-limiting step of the early module is the reduction to mevalonate by the 3-hydroxy-3-methylglutaryl-coenzyme A (HMG-CoA) reductases HMG1 and HMG2 which are derived from a single ancestral HMGR gene by gene duplication. The sequence is that of Acetyl-CoA acetyltransferase from Saccharomyces cerevisiae (strain ATCC 204508 / S288c) (Baker's yeast).